A 272-amino-acid polypeptide reads, in one-letter code: MLDQPIGVIDSGVGGLTVAKEIMRQLPKEKIIYVGDTKRCPYGPRKEEEVLQYTWEMAHYLLRHHHIKMLVIACNTATAIALDEIKATLDIPVIGVIQPGARTAIKVTNNQQIGVIGTANTIKSEAYKEALLSLKAGLAVQSLACPLLVPFVESGTFLDQTADEVVKDSLEPMKETGIDTLILGCTHYPILKESIQRFMGSDVSIISSGDETAREASTILSYKGLLNTSQEAPVHTFYTTGQQQNFENIARDWFGYLPGKVETVSLEHVYQQ.

Substrate-binding positions include Asp10–Ser11 and Tyr42–Gly43. Cys74 serves as the catalytic Proton donor/acceptor. Asn75–Thr76 serves as a coordination point for substrate. Residue Cys185 is the Proton donor/acceptor of the active site. Residue Thr186–His187 participates in substrate binding.

Belongs to the aspartate/glutamate racemases family.

It carries out the reaction L-glutamate = D-glutamate. The protein operates within cell wall biogenesis; peptidoglycan biosynthesis. In terms of biological role, provides the (R)-glutamate required for cell wall biosynthesis. This is Glutamate racemase from Bacillus pumilus (strain SAFR-032).